A 360-amino-acid chain; its full sequence is Photosystem II protein D1 2 (360 aa).

The next 3 membrane-spanning stretches (helical) occupy residues 29-46 (YIGWFGVLMIPTLLTAVT), 118-133 (HYMIGCICYLGRQWEY), and 142-156 (WICVAYSAPLAATYS). Histidine 118 serves as a coordination point for chlorophyll a. Tyrosine 126 serves as a coordination point for pheophytin a. Residues aspartate 170 and glutamate 189 each coordinate [CaMn4O5] cluster. A helical membrane pass occupies residues 197–218 (FHMFGVAGVLGGSLFAAMHGSL). Histidine 198 is a binding site for chlorophyll a. A quinone is bound by residues histidine 215 and 264-265 (SF). Residue histidine 215 participates in Fe cation binding. Residue histidine 272 coordinates Fe cation. Residues 274 to 288 (FLGAWPVVCIWLTAM) traverse the membrane as a helical segment. Residues histidine 332, glutamate 333, aspartate 342, and alanine 344 each contribute to the [CaMn4O5] cluster site. Positions 345-360 (AGESAPVALTAPVING) are excised as a propeptide.

The protein belongs to the reaction center PufL/M/PsbA/D family. In terms of assembly, PSII is composed of 1 copy each of membrane proteins PsbA, PsbB, PsbC, PsbD, PsbE, PsbF, PsbH, PsbI, PsbJ, PsbK, PsbL, PsbM, PsbT, PsbX, PsbY, PsbZ, Psb30/Ycf12, peripheral proteins PsbO, CyanoQ (PsbQ), PsbU, PsbV and a large number of cofactors. It forms dimeric complexes. The D1/D2 heterodimer binds P680, chlorophylls that are the primary electron donor of PSII, and subsequent electron acceptors. It shares a non-heme iron and each subunit binds pheophytin, quinone, additional chlorophylls, carotenoids and lipids. D1 provides most of the ligands for the Mn4-Ca-O5 cluster of the oxygen-evolving complex (OEC). There is also a Cl(-1) ion associated with D1 and D2, which is required for oxygen evolution. The PSII complex binds additional chlorophylls, carotenoids and specific lipids. is required as a cofactor. In terms of processing, tyr-161 forms a radical intermediate that is referred to as redox-active TyrZ, YZ or Y-Z. Post-translationally, C-terminally processed by CtpA; processing is essential to allow assembly of the oxygen-evolving complex and thus photosynthetic growth.

It is found in the cellular thylakoid membrane. It catalyses the reaction 2 a plastoquinone + 4 hnu + 2 H2O = 2 a plastoquinol + O2. In terms of biological role, photosystem II (PSII) is a light-driven water:plastoquinone oxidoreductase that uses light energy to abstract electrons from H(2)O, generating O(2) and a proton gradient subsequently used for ATP formation. It consists of a core antenna complex that captures photons, and an electron transfer chain that converts photonic excitation into a charge separation. The D1/D2 (PsbA/PsbD) reaction center heterodimer binds P680, the primary electron donor of PSII as well as several subsequent electron acceptors. The polypeptide is Photosystem II protein D1 2 (Acaryochloris marina (strain MBIC 11017)).